A 661-amino-acid chain; its full sequence is UvrABC system protein B (661 aa).

Positions 25–182 (AGLSSKKRSQ…NDLINLQYER (158 aa)) constitute a Helicase ATP-binding domain. Residue 38 to 45 (GITGSGKT) participates in ATP binding. The Beta-hairpin motif lies at 91–114 (YYDYYQPEAYIARTDTFIEKDSSI). The region spanning 430–592 (QVEDLISEIQ…IIPKTINRAI (163 aa)) is the Helicase C-terminal domain. The UVR domain maps to 621–656 (KTHIDKLKKEMLKAASNLEFEQAVKLRDQLKTLEEA).

Belongs to the UvrB family. As to quaternary structure, forms a heterotetramer with UvrA during the search for lesions. Interacts with UvrC in an incision complex.

Its subcellular location is the cytoplasm. Functionally, the UvrABC repair system catalyzes the recognition and processing of DNA lesions. A damage recognition complex composed of 2 UvrA and 2 UvrB subunits scans DNA for abnormalities. Upon binding of the UvrA(2)B(2) complex to a putative damaged site, the DNA wraps around one UvrB monomer. DNA wrap is dependent on ATP binding by UvrB and probably causes local melting of the DNA helix, facilitating insertion of UvrB beta-hairpin between the DNA strands. Then UvrB probes one DNA strand for the presence of a lesion. If a lesion is found the UvrA subunits dissociate and the UvrB-DNA preincision complex is formed. This complex is subsequently bound by UvrC and the second UvrB is released. If no lesion is found, the DNA wraps around the other UvrB subunit that will check the other stand for damage. The protein is UvrABC system protein B of Rickettsia rickettsii (strain Sheila Smith).